The sequence spans 377 residues: MKAKTITVKLDKCCYDIIIGSDLIAQAALQIKSFFHQKGPHQKRLAIVTDTNVAALHLETLQAGLSANQIHTIPIIVEAGEQSKSFPVLQTIIDKILAARLERGDSIIAFGGGVIGDLGGFAASIIRRGMHFIQMPTTLLAQIDSSIGGKTGINSQYGKNLIGSFYQPQCVITDTCVLDTLPLREFRAGYAEMVKYGLINQPHFFEWLEKNQKEIFSSGPTRVEAIARSCQFKADIVARDEYEAGERALLNLGHTFGHMLETATAYNANRLIHGEAVAIGMILAYQFSAQLNLISPMLVQRVETHLKAAGLPTQLQDIPGELPNAEMLMTFIAQDKKVSNNRLTFILTHGLGQSFIAKDVASDAVLTFLKQKFTKTH.

Residues 113–117, 137–138, K150, and K159 each bind NAD(+); these read GVIGD and TT. The Zn(2+) site is built by E192, H254, and H273.

Belongs to the sugar phosphate cyclases superfamily. Dehydroquinate synthase family. Requires Co(2+) as cofactor. It depends on Zn(2+) as a cofactor. NAD(+) serves as cofactor.

The protein localises to the cytoplasm. It carries out the reaction 7-phospho-2-dehydro-3-deoxy-D-arabino-heptonate = 3-dehydroquinate + phosphate. The protein operates within metabolic intermediate biosynthesis; chorismate biosynthesis; chorismate from D-erythrose 4-phosphate and phosphoenolpyruvate: step 2/7. Functionally, catalyzes the conversion of 3-deoxy-D-arabino-heptulosonate 7-phosphate (DAHP) to dehydroquinate (DHQ). The protein is 3-dehydroquinate synthase of Bartonella bacilliformis (strain ATCC 35685 / KC583 / Herrer 020/F12,63).